A 594-amino-acid polypeptide reads, in one-letter code: Protein TRANSPORT INHIBITOR RESPONSE 1 (594 aa).

The F-box domain occupies 3–50 (KRIALSFPEEVLEHVFSFIQLDKDRNSVSLVCKSWYEIERWCRRKVFI). Lys-74 provides a ligand contact to 1D-myo-inositol hexakisphosphate. Positions 81 to 82 (DF) are interaction with auxin-responsive proteins. 1D-myo-inositol hexakisphosphate-binding positions include 113–114 (KR) and Arg-344. Positions 347 to 352 (PSEPFV) are interaction with auxin-responsive proteins. 401-403 (RFR) serves as a coordination point for 1D-myo-inositol hexakisphosphate. Arg-403 provides a ligand contact to (indol-3-yl)acetate. The tract at residues 405-409 (CIIEP) is interaction with auxin-responsive proteins. Arg-436 contacts 1D-myo-inositol hexakisphosphate. (indol-3-yl)acetate is bound at residue 438–439 (SL). Positions 464–465 (AF) are interaction with auxin-responsive proteins. 1D-myo-inositol hexakisphosphate-binding positions include 484–485 (RK) and Arg-509.

Interacts with auxin. Part of a SCF E3 ubiquitin ligase complex SCF(TIR1) composed of SKP1, CUL1, RBX1 and TIR1. SCF(TIR1) interacts with the COP9 signalosome (CSN) complex. Interacts with Aux/IAA proteins (IAA3, IAA7, IAA12 and IAA17) in an auxin-dependent manner. The interaction with IAA3, a negative regulator of auxin responses, is promoted by auxin, but repressed by juglon (5-hydroxy-1,4-naphthoquinone). Interactions with auxin-responsive proteins is inactivated by auxin antagonists. In terms of tissue distribution, expressed in roots, stems, leaves and flowers. In adult plants, mostly expressed in floral stigma, anther filaments, abscission zones and vascular tissues.

The protein localises to the nucleus. The protein operates within protein modification; protein ubiquitination. In terms of biological role, auxin receptor that mediates Aux/IAA proteins proteasomal degradation and auxin-regulated transcription. The SCF(TIR1) E3 ubiquitin ligase complex is involved in auxin-mediated signaling pathway that regulate root and hypocotyl growth, lateral root formation, cell elongation, and gravitropism. Appears to allow pericycle cells to overcome G2 arrest prior to lateral root development. Plays a role in ethylene signaling in roots. Confers sensitivity to the virulent bacterial pathogen P.syringae. The polypeptide is Protein TRANSPORT INHIBITOR RESPONSE 1 (TIR1) (Arabidopsis thaliana (Mouse-ear cress)).